The sequence spans 222 residues: MFLNHRTPVLPTPEQALRGRPVPEFTVPSRHTVLGNPLVGPYPDGLEVADFALGCFWGAERKFWQTEGVWTTLVGYQGGYTENPSYEEACSGLTGHTEAVRVVFDPAVVSYEELLKLFWESHNPTQGFRQGNDVGTQYRSAIYTHSPAQAAAADASRAAYQKVLTASGHQEITTEILPAEGRPFWPAEAYHQQYLDKNPGGYCGIGGTGVSCPIGVAPADGR.

Residue Cys55 is part of the active site.

This sequence belongs to the MsrA Met sulfoxide reductase family.

The enzyme catalyses L-methionyl-[protein] + [thioredoxin]-disulfide + H2O = L-methionyl-(S)-S-oxide-[protein] + [thioredoxin]-dithiol. The catalysed reaction is [thioredoxin]-disulfide + L-methionine + H2O = L-methionine (S)-S-oxide + [thioredoxin]-dithiol. Its function is as follows. Has an important function as a repair enzyme for proteins that have been inactivated by oxidation. Catalyzes the reversible oxidation-reduction of methionine sulfoxide in proteins to methionine. This is Peptide methionine sulfoxide reductase MsrA from Streptomyces griseus subsp. griseus (strain JCM 4626 / CBS 651.72 / NBRC 13350 / KCC S-0626 / ISP 5235).